The sequence spans 511 residues: MHQLLENLSGNGMGLLIPLGLSWLIWTILLPKQQYRGKLFNDRARFEWFYTKARRRFLENGGVILNNAFKKSENSFYVMTSREVEIVLNPKYMNEVRNDDRFAVTERVDQLLHGDVPGFGIIKHSAQTHKIFSNTFQSRVVREIGTFLVPIFEEIDHFLETQWTDNEEWHAFSLHPSMVQLVSQESTRLFLGPEMCRDAHWLQASVKYIQSFFMGIDLLDSWRPIFRPLVSKFSKTGKQIRSDLAEARQILSPFIADRQARKAKGEKFNDLLQWFDDAARGAEYDAPLLILRSSMAAVHSTSDLLTKAIFEICTQPGLIDDIREEAIRVFKEHGLRQTAIQELRLTDSVLKETQRLKPLQTTAFIRLTKEDVVLSDGLEIPKGTPIRISNHHMWDPEVSEYPNADQFDGYRFYKLRQVPGQEQTAQLATVSPSHTGFGLGKHACPGRFFAATATKVILCKILLDYDLKLLDGQRPKTMWRGDAQVPDPMCQIVVRRRKEEFNLSSLLHDVK.

The N-linked (GlcNAc...) asparagine glycan is linked to Asn-7. A helical membrane pass occupies residues 10–30; the sequence is GNGMGLLIPLGLSWLIWTILL. Cys-444 is a heme binding site. An N-linked (GlcNAc...) asparagine glycan is attached at Asn-502.

This sequence belongs to the cytochrome P450 family. Heme serves as cofactor.

Its subcellular location is the membrane. The protein operates within secondary metabolite biosynthesis; terpenoid biosynthesis. Cytochrome P450 monooxygenase; part of the gene cluster that mediates the biosynthesis of paraherquonin, a meroterpenoid with a unique, highly congested hexacyclic molecular architecture. The first step of the pathway is the synthesis of 3,5-dimethylorsellinic acid (DMOA) by the polyketide synthase prhL. Synthesis of DMOA is followed by farnesylation by the prenyltransferase prhE, methylesterification by the methyl-transferase prhM, epoxidation of the prenyl chain by the flavin-dependent monooxygenase prhF, and cyclization of the farnesyl moiety by the terpene cyclase prhH, to yield the tetracyclic intermediate, protoaustinoid A. The short chain dehydrogenase prhI then oxidizes the C-3 alcohol group of the terpene cyclase product to transform protoaustinoid A into protoaustinoid B. The FAD-binding monooxygenase prhJ catalyzes the oxidation of protoaustinoid B into preaustinoid A which is further oxidized into preaustinoid A1 by FAD-binding monooxygenase phrK. Finally, prhA leads to berkeleydione via the berkeleyone B intermediate. PrhA is a multifunctional dioxygenase that first desaturates at C5-C6 to form berkeleyone B, followed by rearrangement of the A/B-ring to form the cycloheptadiene moiety in berkeleydione. Berkeleydione serves as the key intermediate for the biosynthesis of paraherquonin as well as many other meroterpenoids. The cytochrome P450 monooxygenases prhB, prhD, and prhN, as well as the isomerase prhC, are probably involved in the late stage of paraherquonin biosynthesis, after the production of berkeleydione. Especially prhC might be a multifunctional enzyme that catalyzes the D-ring expansion via intramolecular methoxy rearrangement, as well as the hydrolysis of the expanded D-ring. The protein is Cytochrome P450 monooxygenase prhD of Penicillium brasilianum.